Here is a 285-residue protein sequence, read N- to C-terminus: Probable endonuclease 4 (285 aa).

Zn(2+)-binding residues include His69, His109, Glu145, Asp179, His182, His216, Asp229, His231, and Glu261.

The protein belongs to the AP endonuclease 2 family. Zn(2+) serves as cofactor.

It catalyses the reaction Endonucleolytic cleavage to 5'-phosphooligonucleotide end-products.. Functionally, endonuclease IV plays a role in DNA repair. It cleaves phosphodiester bonds at apurinic or apyrimidinic (AP) sites, generating a 3'-hydroxyl group and a 5'-terminal sugar phosphate. This is Probable endonuclease 4 from Escherichia coli O81 (strain ED1a).